Consider the following 310-residue polypeptide: D-alanine--D-alanine ligase (310 aa).

The ATP-grasp domain occupies 107–305; the sequence is KKVWQSAGLP…FSALVQSILA (199 aa). 134–189 provides a ligand contact to ATP; sequence EQLHCQDFVIKPALEGSSVGVSRVKNQEQLAAAIPFAGGARAKIMAEPWIVGRELT. 3 residues coordinate Mg(2+): aspartate 259, glutamate 272, and asparagine 274.

This sequence belongs to the D-alanine--D-alanine ligase family. Mg(2+) serves as cofactor. The cofactor is Mn(2+).

The protein resides in the cytoplasm. It catalyses the reaction 2 D-alanine + ATP = D-alanyl-D-alanine + ADP + phosphate + H(+). The protein operates within cell wall biogenesis; peptidoglycan biosynthesis. Its function is as follows. Cell wall formation. The chain is D-alanine--D-alanine ligase from Dichelobacter nodosus (strain VCS1703A).